The primary structure comprises 419 residues: UDP-N-acetylglucosamine 1-carboxyvinyltransferase 2 (419 aa).

22–23 (KN) contacts phosphoenolpyruvate. Arg92 lines the UDP-N-acetyl-alpha-D-glucosamine pocket. The active-site Proton donor is Cys116. Cys116 bears the 2-(S-cysteinyl)pyruvic acid O-phosphothioketal mark. UDP-N-acetyl-alpha-D-glucosamine-binding positions include 121 to 125 (RPIDL), Asp306, and Ile328.

It belongs to the EPSP synthase family. MurA subfamily.

Its subcellular location is the cytoplasm. It carries out the reaction phosphoenolpyruvate + UDP-N-acetyl-alpha-D-glucosamine = UDP-N-acetyl-3-O-(1-carboxyvinyl)-alpha-D-glucosamine + phosphate. It participates in cell wall biogenesis; peptidoglycan biosynthesis. Its function is as follows. Cell wall formation. Adds enolpyruvyl to UDP-N-acetylglucosamine. This Streptococcus pyogenes serotype M3 (strain ATCC BAA-595 / MGAS315) protein is UDP-N-acetylglucosamine 1-carboxyvinyltransferase 2.